A 581-amino-acid polypeptide reads, in one-letter code: Pyridine nucleotide-disulfide oxidoreductase domain-containing protein 2 (581 aa).

Residue 38–71 (VVIGAGHNGLVAAAYLQRLGVNTAVFERRHVIGG) coordinates FAD.

Belongs to the carotenoid/retinoid oxidoreductase family. As to quaternary structure, interacts with COX5B; this interaction may contribute to localize PYROXD2 to the inner face of the inner mitochondrial membrane.

The protein localises to the mitochondrion matrix. In terms of biological role, probable oxidoreductase that may play a role as regulator of mitochondrial function. The protein is Pyridine nucleotide-disulfide oxidoreductase domain-containing protein 2 of Mus musculus (Mouse).